A 118-amino-acid chain; its full sequence is Small ribosomal subunit protein uS13 (118 aa).

The tract at residues 94–118 (SLPLRGQRTKTNARTRKGPRKPIRK) is disordered.

This sequence belongs to the universal ribosomal protein uS13 family. Part of the 30S ribosomal subunit. Forms a loose heterodimer with protein S19. Forms two bridges to the 50S subunit in the 70S ribosome.

Located at the top of the head of the 30S subunit, it contacts several helices of the 16S rRNA. In the 70S ribosome it contacts the 23S rRNA (bridge B1a) and protein L5 of the 50S subunit (bridge B1b), connecting the 2 subunits; these bridges are implicated in subunit movement. Contacts the tRNAs in the A and P-sites. This is Small ribosomal subunit protein uS13 from Shewanella sediminis (strain HAW-EB3).